A 328-amino-acid chain; its full sequence is MAKDIRVLLYYLYTPIENAEQFAADHLAFCKSIGLKGRILVADEGINGTVSGDYETTQKYMDYVHSLPGMEELWFKIDEESEQAFKKMFVRYKKEIVHLGLEDNDFDNDINPLETTGAYLSPKEFKEALLDKDTVVLDTRNDYEYDLGHFRGAIRPDIRNFREXPQWVRDNKEKFMDKRVVVYCTGGVRCEKFSGWMVREGYKDVGQLHGGIATYGKDPEVQGELWDGKMYVFDERIAVDVNHVNPTIVGKDWFDGTPCERYVNCGNPFCNRRILTSEENEDKYLRGCSHECRVHPRNRYVSKNELTQAEVIERLAAIGESLDQAATV.

Residues 130–224 (LDKDTVVLDT…YGKDPEVQGE (95 aa)) form the Rhodanese domain. The Cysteine persulfide intermediate role is filled by Cys184.

The protein belongs to the TrhO family.

The catalysed reaction is uridine(34) in tRNA + AH2 + O2 = 5-hydroxyuridine(34) in tRNA + A + H2O. Functionally, catalyzes oxygen-dependent 5-hydroxyuridine (ho5U) modification at position 34 in tRNAs. The protein is tRNA uridine(34) hydroxylase of Streptococcus pneumoniae serotype 19F (strain G54).